The primary structure comprises 119 residues: Large ribosomal subunit protein bL20 (119 aa).

It belongs to the bacterial ribosomal protein bL20 family.

Functionally, binds directly to 23S ribosomal RNA and is necessary for the in vitro assembly process of the 50S ribosomal subunit. It is not involved in the protein synthesizing functions of that subunit. The chain is Large ribosomal subunit protein bL20 from Laribacter hongkongensis (strain HLHK9).